The following is a 64-amino-acid chain: Potassium channel toxin kappa-KTx 4.1 (64 aa).

The first 26 residues, Met-1 to Ala-26, serve as a signal peptide directing secretion. Positions Glu-27–Glu-38 are excised as a propeptide. 2 cysteine pairs are disulfide-bonded: Cys-43-Cys-61 and Cys-47-Cys-57.

It belongs to the short scorpion toxin superfamily. Potassium channel inhibitor kappa-KTx family. Kappa-KTx 4 subfamily. As to expression, expressed by the venom gland.

Its subcellular location is the secreted. Functionally, potassium channel inhibitor (Kv). This Heterometrus petersii (Asian forest scorpion) protein is Potassium channel toxin kappa-KTx 4.1.